A 319-amino-acid polypeptide reads, in one-letter code: Ornithine carbamoyltransferase (319 aa).

Carbamoyl phosphate is bound by residues serine 55 to threonine 58, glutamine 82, arginine 106, and histidine 133 to glutamine 136. L-ornithine contacts are provided by residues asparagine 171, aspartate 234, and serine 238–methionine 239. Carbamoyl phosphate is bound by residues cysteine 274–leucine 275 and arginine 302.

The protein belongs to the aspartate/ornithine carbamoyltransferase superfamily. OTCase family.

It is found in the cytoplasm. The catalysed reaction is carbamoyl phosphate + L-ornithine = L-citrulline + phosphate + H(+). Its pathway is amino-acid biosynthesis; L-arginine biosynthesis; L-arginine from L-ornithine and carbamoyl phosphate: step 1/3. Functionally, reversibly catalyzes the transfer of the carbamoyl group from carbamoyl phosphate (CP) to the N(epsilon) atom of ornithine (ORN) to produce L-citrulline. The polypeptide is Ornithine carbamoyltransferase (argF) (Corynebacterium glutamicum (strain ATCC 13032 / DSM 20300 / JCM 1318 / BCRC 11384 / CCUG 27702 / LMG 3730 / NBRC 12168 / NCIMB 10025 / NRRL B-2784 / 534)).